The chain runs to 73 residues: DNA gyrase inhibitor YacG (73 aa).

Residues cysteine 12, cysteine 15, cysteine 31, and cysteine 35 each contribute to the Zn(2+) site. Positions aspartate 47–aspartate 73 are disordered.

Belongs to the DNA gyrase inhibitor YacG family. As to quaternary structure, interacts with GyrB. The cofactor is Zn(2+).

In terms of biological role, inhibits all the catalytic activities of DNA gyrase by preventing its interaction with DNA. Acts by binding directly to the C-terminal domain of GyrB, which probably disrupts DNA binding by the gyrase. The chain is DNA gyrase inhibitor YacG from Methylococcus capsulatus (strain ATCC 33009 / NCIMB 11132 / Bath).